The sequence spans 196 residues: Imidazole glycerol phosphate synthase subunit HisH (196 aa).

One can recognise a Glutamine amidotransferase type-1 domain in the interval 2–196; that stretch reads KATLINYGVG…LRNFYSWVKR (195 aa). The Nucleophile role is filled by cysteine 76. Residues histidine 175 and glutamate 177 contribute to the active site.

In terms of assembly, heterodimer of HisH and HisF.

The protein localises to the cytoplasm. The catalysed reaction is 5-[(5-phospho-1-deoxy-D-ribulos-1-ylimino)methylamino]-1-(5-phospho-beta-D-ribosyl)imidazole-4-carboxamide + L-glutamine = D-erythro-1-(imidazol-4-yl)glycerol 3-phosphate + 5-amino-1-(5-phospho-beta-D-ribosyl)imidazole-4-carboxamide + L-glutamate + H(+). It carries out the reaction L-glutamine + H2O = L-glutamate + NH4(+). Its pathway is amino-acid biosynthesis; L-histidine biosynthesis; L-histidine from 5-phospho-alpha-D-ribose 1-diphosphate: step 5/9. In terms of biological role, IGPS catalyzes the conversion of PRFAR and glutamine to IGP, AICAR and glutamate. The HisH subunit catalyzes the hydrolysis of glutamine to glutamate and ammonia as part of the synthesis of IGP and AICAR. The resulting ammonia molecule is channeled to the active site of HisF. This chain is Imidazole glycerol phosphate synthase subunit HisH, found in Sulfurisphaera tokodaii (strain DSM 16993 / JCM 10545 / NBRC 100140 / 7) (Sulfolobus tokodaii).